The chain runs to 1132 residues: Large proline-rich protein BAG6 (1132 aa).

N-acetylmethionine is present on methionine 1. The Ubiquitin-like domain occupies 17–92; sequence LEVLVKTLDS…HLVERAPPQT (76 aa). Disordered stretches follow at residues 87–126 and 189–272; these read RAPP…SVHD and LQCR…NHPS. The segment covering 95–108 has biased composition (low complexity); that stretch reads PSGASSGTGSASAT. 2 positions are modified to phosphoserine: serine 96 and serine 113. Residue threonine 117 is modified to Phosphothreonine. Composition is skewed to pro residues over residues 200–210 and 251–262; these read SQPPPQPPAVT and TPGPAPAGPTPA. Copy 1 of the repeat occupies 242–270; it reads RAPAQNPELTPGPAPAGPTPAPETNAPNH. The segment at 242 to 636 is 4 X 29 AA approximate repeats; the sequence is RAPAQNPELT…VASPTITVAM (395 aa). Threonine 350 carries the post-translational modification Phosphothreonine. Disordered stretches follow at residues 385-441, 461-528, and 560-603; these read VTMT…TSHP, IQDS…TLQG, and PGMA…PSMA. Positions 393–407 are enriched in pro residues; it reads RPPPTPNAEAPPPGP. Over residues 408-426 the composition is skewed to low complexity; it reads GQASSVAPSSTNVESSAEG. Repeat 2 spans residues 415-443; sequence PSSTNVESSAEGAPPPGPAPPPATSHPRV. Composition is skewed to pro residues over residues 427 to 438 and 507 to 520; these read APPPGPAPPPAT and PTPP…PGGP. Residues 569–586 are compositionally biased toward low complexity; it reads ATASASAGTTNTATTAGP. Tandem repeats lie at residues 574-602 and 608-636. Over residues 588–599 the composition is skewed to pro residues; that stretch reads PGGPAQPPPTPQ. Residues 651–692 form a disordered region; sequence QATQTAPPPPPPPPPPPPAPEQQTMPPPGSPSGGAGSPGGLG. Pro residues predominate over residues 656–680; it reads APPPPPPPPPPPPAPEQQTMPPPGS. Residues 681–692 are compositionally biased toward gly residues; it reads PSGGAGSPGGLG. Residues valine 832, serine 964, and serine 973 each carry the phosphoserine modification. The tract at residues 947-1132 is disordered; it reads PQPLPEEPME…NAQRAFADDP (186 aa). Low complexity predominate over residues 1005–1020; the sequence is AETEPWAAAVPPEWVP. Residues 1010–1040 form a required for interaction with GET4 region; it reads WAAAVPPEWVPIIQQDIQSQRKVKPQPPLSD. The Nuclear localization site motif lies at 1012–1054; that stretch reads AAVPPEWVPIIQQDIQSQRKVKPQPPLSDAYLSGMPAKRRKTM. The segment at 1022–1132 is sufficient for the delivery of client proteins to the endoplasmic reticulum; that stretch reads IQQDIQSQRK…NAQRAFADDP (111 aa). At threonine 1053 the chain carries Phosphothreonine. Residues 1058-1115 form a BAG-similar domain, required and sufficient for interaction with UBL4A region; that stretch reads GPQLLLSEAVSRAAKAAGARPLTSPESLSRDLEAPEVQESYRQQLRSDIQKRLQEDPN. The span at 1066–1076 shows a compositional bias: low complexity; sequence AVSRAAKAAGA. Residues serine 1081 and serine 1117 each carry the phosphoserine modification.

As to quaternary structure, component of the BAG6/BAT3 complex, also named BAT3 complex, at least composed of BAG6, UBL4A and GET4/TRC35. Interacts with GET4; the interaction is direct and localizes BAG6 in the cytosol. Interacts with UBL4A; the interaction is direct and required for UBL4A protein stability. Interacts with AIFM1. Interacts with HSPA2. Interacts with CTCFL. Interacts with p300/EP300. Interacts (via ubiquitin-like domain) with RNF126; required for BAG6-dependent ubiquitination of proteins mislocalized to the cytosol. Interacts (via ubiquitin-like domain) with SGTA; SGTA competes with RNF126 by binding the same region of BAG6, thereby promoting deubiquitination of BAG6-target proteins and rescuing them from degradation. Interacts with ricin A chain. Interacts with VCP and AMFR; both form the VCP/p97-AMFR/gp78 complex. Interacts with SYVN1. Interacts with USP13; the interaction is direct and may mediate UBL4A deubiquitination. Interacts with ZFAND2B. Interacts with KPNA2. Interacts with UBQLN4. (Microbial infection) Interacts with L.pneumophila Lpg2160 and LegU1 proteins. In terms of processing, ricin can induce a cleavage by the caspase CASP3. The released C-terminal peptide induces apoptosis. Post-translationally, (Microbial infection) In case of infection by L.pneumophila, ubiquitinated by the SCF(LegU1) complex. As to expression, expressed by immature dendritic cells (at protein level).

Its subcellular location is the cytoplasm. The protein localises to the cytosol. It is found in the nucleus. The protein resides in the secreted. It localises to the extracellular exosome. Its function is as follows. ATP-independent molecular chaperone preventing the aggregation of misfolded and hydrophobic patches-containing proteins. Functions as part of a cytosolic protein quality control complex, the BAG6/BAT3 complex, which maintains these client proteins in a soluble state and participates in their proper delivery to the endoplasmic reticulum or alternatively can promote their sorting to the proteasome where they undergo degradation. The BAG6/BAT3 complex is involved in the post-translational delivery of tail-anchored/type II transmembrane proteins to the endoplasmic reticulum membrane. Recruited to ribosomes, it interacts with the transmembrane region of newly synthesized tail-anchored proteins and together with SGTA and ASNA1 mediates their delivery to the endoplasmic reticulum. Client proteins that cannot be properly delivered to the endoplasmic reticulum are ubiquitinated by RNF126, an E3 ubiquitin-protein ligase associated with BAG6 and are sorted to the proteasome. SGTA which prevents the recruitment of RNF126 to BAG6 may negatively regulate the ubiquitination and the proteasomal degradation of client proteins. Similarly, the BAG6/BAT3 complex also functions as a sorting platform for proteins of the secretory pathway that are mislocalized to the cytosol either delivering them to the proteasome for degradation or to the endoplasmic reticulum. The BAG6/BAT3 complex also plays a role in the endoplasmic reticulum-associated degradation (ERAD), a quality control mechanism that eliminates unwanted proteins of the endoplasmic reticulum through their retrotranslocation to the cytosol and their targeting to the proteasome. It maintains these retrotranslocated proteins in an unfolded yet soluble state condition in the cytosol to ensure their proper delivery to the proteasome. BAG6 is also required for selective ubiquitin-mediated degradation of defective nascent chain polypeptides by the proteasome. In this context, it may participate in the production of antigenic peptides and play a role in antigen presentation in immune response. BAG6 is also involved in endoplasmic reticulum stress-induced pre-emptive quality control, a mechanism that selectively attenuates the translocation of newly synthesized proteins into the endoplasmic reticulum and reroutes them to the cytosol for proteasomal degradation. BAG6 may ensure the proper degradation of these proteins and thereby protects the endoplasmic reticulum from protein overload upon stress. By inhibiting the polyubiquitination and subsequent proteasomal degradation of HSPA2 it may also play a role in the assembly of the synaptonemal complex during spermatogenesis. Also positively regulates apoptosis by interacting with and stabilizing the proapoptotic factor AIFM1. By controlling the steady-state expression of the IGF1R receptor, indirectly regulates the insulin-like growth factor receptor signaling pathway. Involved in DNA damage-induced apoptosis: following DNA damage, accumulates in the nucleus and forms a complex with p300/EP300, enhancing p300/EP300-mediated p53/TP53 acetylation leading to increase p53/TP53 transcriptional activity. When nuclear, may also act as a component of some chromatin regulator complex that regulates histone 3 'Lys-4' dimethylation (H3K4me2). Functionally, released extracellularly via exosomes, it is a ligand of the natural killer/NK cells receptor NCR3 and stimulates NK cells cytotoxicity. It may thereby trigger NK cells cytotoxicity against neighboring tumor cells and immature myeloid dendritic cells (DC). In terms of biological role, mediates ricin-induced apoptosis. This chain is Large proline-rich protein BAG6, found in Homo sapiens (Human).